A 235-amino-acid chain; its full sequence is Chaperone protein TorD (235 aa).

The protein belongs to the TorD/DmsD family. TorD subfamily.

The protein resides in the cytoplasm. Functionally, involved in the biogenesis of TorA. Acts on TorA before the insertion of the molybdenum cofactor and, as a result, probably favors a conformation of the apoenzyme that is competent for acquiring the cofactor. This Shewanella amazonensis (strain ATCC BAA-1098 / SB2B) protein is Chaperone protein TorD.